Reading from the N-terminus, the 249-residue chain is MEAQQDFTKHPEVAQDRLVLYVRKAIPAPTANSLKPLMILEALEIPYSIHLISSLSQETWYHEINPYKQLPALEDIDLVETSGGSKRRLNVFDSSAMLIYLCDKHDKDGLFIGRNATERAQVTSWLIAYAAGLGATGEWWLKMRHDENLKPALRVIENAIRREYDILEKRLGEPGQRWIALADRPTVADFAIQPLANPRVARNAAIDFEAWPRTKAWSEAVDRLAYIDRAKRLNNKLGMTEEEIELHGR.

The 90-residue stretch at 20–109 folds into the GST N-terminal domain; it reads LYVRKAIPAP…YLCDKHDKDG (90 aa). One can recognise a GST C-terminal domain in the interval 115-249; sequence NATERAQVTS…TEEEIELHGR (135 aa).

The protein belongs to the GST superfamily.

It carries out the reaction RX + glutathione = an S-substituted glutathione + a halide anion + H(+). Its pathway is secondary metabolite biosynthesis. Its function is as follows. Glutathione S-transferase; part of the gene cluster that mediates the biosynthesis of an unusual class of epipolythiodioxopiperazines (ETPs) lacking the reactive thiol group important for toxicity. Firstly, L-tyrosine is prenylated by tcpD, before undergoing condensation with L-glycine in a reaction catalyzed by the NRPS tcpP leading to the diketopiperazine (DKP) backbone. Afterwards the alpha-carbon of tyrosine is oxidized by the cytochrome P450 tcpC to form a hydroxyl group. However, in contrast other ETP biosynthesis pathways studied so far, tcpC is not able to bishydroxylate the DKP at both alpha-carbon positions, but hydroxylates the alpha-carbon of the tyrosine part and the nitrogen of the glycine part. The next steps involve an alpha,beta-elimination reaction catalyzed by tcpI, a methylation by the methyltransferase tcpN the action of the four enzyme cascade tcpG/K/J/I. Due to a dysfunctional cytochrome P450 monooxygenase tcpC, the pathway leads to the biosynthesis of probable non-toxic metabolites lacking the reactive thiol group. The polypeptide is Glutathione S-transferase tcpG (Claviceps purpurea (strain 20.1) (Ergot fungus)).